A 285-amino-acid chain; its full sequence is ATP synthase gamma chain (285 aa).

The protein belongs to the ATPase gamma chain family. In terms of assembly, F-type ATPases have 2 components, CF(1) - the catalytic core - and CF(0) - the membrane proton channel. CF(1) has five subunits: alpha(3), beta(3), gamma(1), delta(1), epsilon(1). CF(0) has three main subunits: a, b and c.

Its subcellular location is the cell membrane. Functionally, produces ATP from ADP in the presence of a proton gradient across the membrane. The gamma chain is believed to be important in regulating ATPase activity and the flow of protons through the CF(0) complex. This chain is ATP synthase gamma chain, found in Halalkalibacterium halodurans (strain ATCC BAA-125 / DSM 18197 / FERM 7344 / JCM 9153 / C-125) (Bacillus halodurans).